The following is a 479-amino-acid chain: Citrate synthase, mitochondrial (479 aa).

A mitochondrion-targeting transit peptide spans 1–37; it reads MSAILSTTSKSFLSRGSTRQCQNMQKALFALLNARHY. Active-site residues include His312, His358, and Asp413. At Ser462 the chain carries Phosphoserine.

This sequence belongs to the citrate synthase family. In terms of assembly, monomer and homodimer. Exists as an inactive monomer when phosphorylated. Homodimerization is dependent on dephosphorylation of Ser-462 by PTC7 and is required for activity. Post-translationally, phosphorylation at Ser-462. Dephosphorylated at Ser-462 by PTC7.

The protein localises to the mitochondrion matrix. It carries out the reaction oxaloacetate + acetyl-CoA + H2O = citrate + CoA + H(+). It participates in carbohydrate metabolism; tricarboxylic acid cycle; isocitrate from oxaloacetate: step 1/2. Phosphorylation at Ser-462 inhibits catalytic activity. Dephosphorylation at Ser-462 by PTC7 enhances catalytic activity. In terms of biological role, specific citrate synthase with catalytic activity only with acetyl-CoA. This Saccharomyces cerevisiae (strain ATCC 204508 / S288c) (Baker's yeast) protein is Citrate synthase, mitochondrial.